The following is a 160-amino-acid chain: Small ribosomal subunit protein uS9 (160 aa).

This sequence belongs to the universal ribosomal protein uS9 family.

The polypeptide is Small ribosomal subunit protein uS9 (Rhodopseudomonas palustris (strain ATCC BAA-98 / CGA009)).